Consider the following 372-residue polypeptide: Pyruvylated Gal-beta-1,3-epitope synthesis protein 5 (372 aa).

Over 1 to 12 (MGLPLRIFAGNG) the chain is Cytoplasmic. The helical; Signal-anchor for type II membrane protein transmembrane segment at 13 to 35 (IGGWCLRLFLFGSLILLLRPLIF) threads the bilayer. At 36–372 (YSNTTMKKLK…LRIIEQWKQL (337 aa)) the chain is on the lumenal side. N-linked (GlcNAc...) asparagine glycans are attached at residues Asn38 and Asn128.

The protein localises to the golgi apparatus membrane. Involved in cell wall biogenesis. Has a role in the addition of Gal-beta1,3 moeities to galactomannans and their subsequent pyruvylation. Has a role in meiosis. This chain is Pyruvylated Gal-beta-1,3-epitope synthesis protein 5 (pvg5), found in Schizosaccharomyces pombe (strain 972 / ATCC 24843) (Fission yeast).